A 334-amino-acid chain; its full sequence is Cathepsin K (334 aa).

Positions 1–19 (MLRLHWLALLVLLLPMAAA) are cleaved as a signal peptide. Positions 20–119 (QLRPEPELDA…TLYVPDWSSR (100 aa)) are cleaved as a propeptide — activation peptide. Asparagine 108 carries an N-linked (GlcNAc...) asparagine glycan. 3 disulfides stabilise this stretch: cysteine 141/cysteine 182, cysteine 175/cysteine 215, and cysteine 274/cysteine 323. Residue cysteine 144 is part of the active site. Active-site residues include histidine 281 and asparagine 301.

This sequence belongs to the peptidase C1 family.

The catalysed reaction is Broad proteolytic activity. With small-molecule substrates and inhibitors, the major determinant of specificity is P2, which is preferably Leu, Met &gt; Phe, and not Arg.. In terms of biological role, closely involved in osteoclastic bone resorption and may participate partially in the disorder of bone remodeling. Displays potent endoprotease activity against fibrinogen at acid pH. May play an important role in extracellular matrix degradation. The polypeptide is Cathepsin K (CTSK) (Gallus gallus (Chicken)).